The primary structure comprises 145 residues: UPF0201 protein SSO1042 (145 aa).

Belongs to the UPF0201 family.

The chain is UPF0201 protein SSO1042 from Saccharolobus solfataricus (strain ATCC 35092 / DSM 1617 / JCM 11322 / P2) (Sulfolobus solfataricus).